We begin with the raw amino-acid sequence, 506 residues long: Cytochrome P450 71B8 (506 aa).

Residues 5–25 (ILLCFFFLFPLLLTLFKKLLP) form a helical membrane-spanning segment. Position 443 (Cys443) interacts with heme.

This sequence belongs to the cytochrome P450 family. Requires heme as cofactor.

The protein resides in the membrane. The protein is Cytochrome P450 71B8 (CYP71B8) of Arabidopsis thaliana (Mouse-ear cress).